The primary structure comprises 38 residues: Large ribosomal subunit protein bL36 (38 aa).

This sequence belongs to the bacterial ribosomal protein bL36 family.

This Saccharophagus degradans (strain 2-40 / ATCC 43961 / DSM 17024) protein is Large ribosomal subunit protein bL36.